Here is a 423-residue protein sequence, read N- to C-terminus: uncharacterized protein (423 aa).

It belongs to the mycobacterial PPE family.

In terms of biological role, could be required for host endothelial-cell invasion and/or intracellular survival. This is an uncharacterized protein from Mycobacterium tuberculosis (strain CDC 1551 / Oshkosh).